A 173-amino-acid chain; its full sequence is Nicotinamide-nucleotide adenylyltransferase (173 aa).

This sequence belongs to the archaeal NMN adenylyltransferase family.

Its subcellular location is the cytoplasm. The enzyme catalyses beta-nicotinamide D-ribonucleotide + ATP + H(+) = diphosphate + NAD(+). The protein operates within cofactor biosynthesis; NAD(+) biosynthesis; NAD(+) from nicotinamide D-ribonucleotide: step 1/1. The sequence is that of Nicotinamide-nucleotide adenylyltransferase from Methanosarcina mazei (strain ATCC BAA-159 / DSM 3647 / Goe1 / Go1 / JCM 11833 / OCM 88) (Methanosarcina frisia).